A 166-amino-acid polypeptide reads, in one-letter code: Thiol peroxidase (166 aa).

Positions 18 to 166 constitute a Thioredoxin domain; the sequence is LKVGDKAPDV…NYEALLKVLK (149 aa). The active-site Cysteine sulfenic acid (-SOH) intermediate is the Cys60. Cysteines 60 and 94 form a disulfide.

Belongs to the peroxiredoxin family. Tpx subfamily. Homodimer.

The catalysed reaction is a hydroperoxide + [thioredoxin]-dithiol = an alcohol + [thioredoxin]-disulfide + H2O. Functionally, thiol-specific peroxidase that catalyzes the reduction of hydrogen peroxide and organic hydroperoxides to water and alcohols, respectively. Plays a role in cell protection against oxidative stress by detoxifying peroxides. The chain is Thiol peroxidase from Helicobacter pylori (strain J99 / ATCC 700824) (Campylobacter pylori J99).